Consider the following 305-residue polypeptide: U6 small nuclear RNA (adenine-(43)-N(6))-methyltransferase (305 aa).

Residues arginine 87, glycine 112, glutamate 135, threonine 166, and asparagine 188 each contribute to the S-adenosyl-L-methionine site. The tract at residues 197–221 is disordered; that stretch reads PNPLGGNTRNPERRPAPNNARTGSQ.

It belongs to the methyltransferase superfamily. METTL16/RlmF family.

It catalyses the reaction adenosine in U6 snRNA + S-adenosyl-L-methionine = N(6)-methyladenosine in U6 snRNA + S-adenosyl-L-homocysteine + H(+). Its function is as follows. RNA N6-methyltransferase that mediates N6-methylation of adenine of U6 small nuclear RNA (U6 snRNA). The sequence is that of U6 small nuclear RNA (adenine-(43)-N(6))-methyltransferase from Drosophila melanogaster (Fruit fly).